The following is a 146-amino-acid chain: MIF-like protein mif-3 (146 aa).

It belongs to the MIF family.

The polypeptide is MIF-like protein mif-3 (mif-3) (Caenorhabditis elegans).